The sequence spans 90 residues: Conotoxin Mr22.1 (90 aa).

The N-terminal stretch at 1–18 (MMTRVFFAMFFLMALTEG) is a signal peptide. The propeptide occupies 19-49 (WPRLYDSDCVRGRNMHITCFKDQTCGLTVKR). Residue tryptophan 75 is modified to 6'-bromotryptophan.

Belongs to the E superfamily. In terms of processing, contains 4 disulfide bonds. As to expression, expressed by the venom duct.

The protein resides in the secreted. The protein is Conotoxin Mr22.1 of Conus marmoreus (Marble cone).